The following is a 656-amino-acid chain: NADH-ubiquinone oxidoreductase chain 5 (656 aa).

17 consecutive transmembrane segments (helical) span residues 4 to 21 (TLIILPLLGSIVSGFFGR), 28 to 50 (AHLITCVSVITTTFLAILAFFEV), 81 to 103 (LTVSMFITVLIVSSLVHIYSISY), 112 to 129 (RFFSYLSLFTFMMIILVT), 133 to 155 (YLIMFVGWEGVGVCSYLLVNFWF), 176 to 198 (TLLTVGMFAILWSFGNIDYSTVF), 208 to 230 (IITIIGICLLIGATAKSSQVGLH), 243 to 262 (VSALIHAATMVTAGVYLLMR), 272 to 294 (TVLVLCLWLGAITTVFSSLIGLF), 301 to 319 (VIAYSTMSQLGMMVIAVGL), 329 to 351 (LVNHAFYKALLFLGAGSVIHAVA), 364 to 386 (EFLPLTYSVMLIASLSLVAVPFM), 409 to 431 (IVYFVATIGAMFTTLYSAKVLYL), 452 to 471 (LFMTIPLIILAIFSIFFGYL), 514 to 536 (FVFTVSLSLLSVLLSEFLPKLLI), 603 to 625 (SLGNLSTGIVTTYALYILIGLIF), and 629 to 651 (LLYFSYNDNNLLILIIFTLFALL).

Belongs to the complex I subunit 5 family.

Its subcellular location is the mitochondrion inner membrane. It catalyses the reaction a ubiquinone + NADH + 5 H(+)(in) = a ubiquinol + NAD(+) + 4 H(+)(out). In terms of biological role, core subunit of the mitochondrial membrane respiratory chain NADH dehydrogenase (Complex I) that is believed to belong to the minimal assembly required for catalysis. Complex I functions in the transfer of electrons from NADH to the respiratory chain. The immediate electron acceptor for the enzyme is believed to be ubiquinone. The protein is NADH-ubiquinone oxidoreductase chain 5 (nad5) of Aspergillus niger.